Consider the following 293-residue polypeptide: Diaminopimelate epimerase (293 aa).

Residues N17, Q47, and N67 each contribute to the substrate site. Residue C76 is the Proton donor of the active site. Residues 77–78 (GN), N164, N197, and 215–216 (ER) each bind substrate. Catalysis depends on C224, which acts as the Proton acceptor. Position 225–226 (225–226 (GS)) interacts with substrate.

Belongs to the diaminopimelate epimerase family. In terms of assembly, homodimer.

The protein localises to the cytoplasm. The catalysed reaction is (2S,6S)-2,6-diaminopimelate = meso-2,6-diaminopimelate. It functions in the pathway amino-acid biosynthesis; L-lysine biosynthesis via DAP pathway; DL-2,6-diaminopimelate from LL-2,6-diaminopimelate: step 1/1. In terms of biological role, catalyzes the stereoinversion of LL-2,6-diaminopimelate (L,L-DAP) to meso-diaminopimelate (meso-DAP), a precursor of L-lysine and an essential component of the bacterial peptidoglycan. The chain is Diaminopimelate epimerase from Rhodopseudomonas palustris (strain HaA2).